A 318-amino-acid chain; its full sequence is Bis(5'-nucleosyl)-tetraphosphatase, symmetrical (318 aa).

The disordered stretch occupies residues 269–318; sequence PGREVTGPAPVARAPRRPRERLGRQRSRGNRGNAGNTAVPAKPPVDTPQD. Basic residues predominate over residues 282–297; the sequence is APRRPRERLGRQRSRG. A compositionally biased stretch (pro residues) spans 309-318; sequence AKPPVDTPQD.

The protein belongs to the Ap4A hydrolase family.

The catalysed reaction is P(1),P(4)-bis(5'-adenosyl) tetraphosphate + H2O = 2 ADP + 2 H(+). Hydrolyzes diadenosine 5',5'''-P1,P4-tetraphosphate to yield ADP. This Xanthomonas oryzae pv. oryzae (strain PXO99A) protein is Bis(5'-nucleosyl)-tetraphosphatase, symmetrical.